The following is a 256-amino-acid chain: Large ribosomal subunit protein eL8A (256 aa).

The interval 1 to 37 is disordered; it reads MAPGKKVAPAPFGAKSTKSNKTRNPLTHSTPKNFGIG. Positions 16 to 32 are enriched in polar residues; sequence STKSNKTRNPLTHSTPK.

The protein belongs to the eukaryotic ribosomal protein eL8 family. As to quaternary structure, component of the large ribosomal subunit (LSU). Mature yeast ribosomes consist of a small (40S) and a large (60S) subunit. The 40S small subunit contains 1 molecule of ribosomal RNA (18S rRNA) and 33 different proteins (encoded by 57 genes). The large 60S subunit contains 3 rRNA molecules (25S, 5.8S and 5S rRNA) and 46 different proteins (encoded by 81 genes).

Its subcellular location is the cytoplasm. Functionally, component of the ribosome, a large ribonucleoprotein complex responsible for the synthesis of proteins in the cell. The small ribosomal subunit (SSU) binds messenger RNAs (mRNAs) and translates the encoded message by selecting cognate aminoacyl-transfer RNA (tRNA) molecules. The large subunit (LSU) contains the ribosomal catalytic site termed the peptidyl transferase center (PTC), which catalyzes the formation of peptide bonds, thereby polymerizing the amino acids delivered by tRNAs into a polypeptide chain. The nascent polypeptides leave the ribosome through a tunnel in the LSU and interact with protein factors that function in enzymatic processing, targeting, and the membrane insertion of nascent chains at the exit of the ribosomal tunnel. The sequence is that of Large ribosomal subunit protein eL8A from Saccharomyces cerevisiae (strain ATCC 204508 / S288c) (Baker's yeast).